The chain runs to 221 residues: GFP-like non-fluorescent chromoprotein (221 aa).

Residues 62–64 constitute a cross-link (2-iminomethyl-5-imidazolinone (Gln-Gly)); it reads QYG. Y63 carries the (E)-2,3-didehydrotyrosine modification.

The protein belongs to the GFP family. As to quaternary structure, homotetramer. Contains a chromophore consisting of modified amino acid residues. The chromophore is formed by autocatalytic backbone condensation between Xaa-N and Gly-(N+2), oxidation of Tyr-(N+1) to didehydrotyrosine, and formation of a double bond to the alpha-amino nitrogen of residue Xaa-N. Maturation of the chromophore requires nothing other than molecular oxygen.

In terms of biological role, thought to play a role in photoprotection of the coral's resident symbiont microalgae's photosystems from photoinhibition caused by high light levels found near the surface of coral reefs. The polypeptide is GFP-like non-fluorescent chromoprotein (Montipora efflorescens (Pore coral)).